Consider the following 263-residue polypeptide: Cytochrome c oxidase subunit 3 (263 aa).

The next 7 membrane-spanning stretches (helical) occupy residues 9 to 29 (PFHM…AMIL), 40 to 60 (FNMN…IQWW), 84 to 104 (GMIL…WAFF), 129 to 149 (IQIP…ITWA), 161 to 181 (ALQG…LQMY), 198 to 218 (TFFV…TFLL), and 241 to 261 (AWYW…IYWW).

The protein belongs to the cytochrome c oxidase subunit 3 family. Component of the cytochrome c oxidase (complex IV, CIV), a multisubunit enzyme composed of a catalytic core of 3 subunits and several supernumerary subunits. The complex exists as a monomer or a dimer and forms supercomplexes (SCs) in the inner mitochondrial membrane with ubiquinol-cytochrome c oxidoreductase (cytochrome b-c1 complex, complex III, CIII).

It is found in the mitochondrion inner membrane. It catalyses the reaction 4 Fe(II)-[cytochrome c] + O2 + 8 H(+)(in) = 4 Fe(III)-[cytochrome c] + 2 H2O + 4 H(+)(out). Functionally, component of the cytochrome c oxidase, the last enzyme in the mitochondrial electron transport chain which drives oxidative phosphorylation. The respiratory chain contains 3 multisubunit complexes succinate dehydrogenase (complex II, CII), ubiquinol-cytochrome c oxidoreductase (cytochrome b-c1 complex, complex III, CIII) and cytochrome c oxidase (complex IV, CIV), that cooperate to transfer electrons derived from NADH and succinate to molecular oxygen, creating an electrochemical gradient over the inner membrane that drives transmembrane transport and the ATP synthase. Cytochrome c oxidase is the component of the respiratory chain that catalyzes the reduction of oxygen to water. Electrons originating from reduced cytochrome c in the intermembrane space (IMS) are transferred via the dinuclear copper A center (CU(A)) of subunit 2 and heme A of subunit 1 to the active site in subunit 1, a binuclear center (BNC) formed by heme A3 and copper B (CU(B)). The BNC reduces molecular oxygen to 2 water molecules using 4 electrons from cytochrome c in the IMS and 4 protons from the mitochondrial matrix. This is Cytochrome c oxidase subunit 3 (COIII) from Locusta migratoria (Migratory locust).